Reading from the N-terminus, the 347-residue chain is Large ribosomal subunit protein uL3 (347 aa).

This sequence belongs to the universal ribosomal protein uL3 family. As to quaternary structure, part of the 50S ribosomal subunit. Forms a cluster with proteins L14 and L24e.

Its function is as follows. One of the primary rRNA binding proteins, it binds directly near the 3'-end of the 23S rRNA, where it nucleates assembly of the 50S subunit. The polypeptide is Large ribosomal subunit protein uL3 (Caldivirga maquilingensis (strain ATCC 700844 / DSM 13496 / JCM 10307 / IC-167)).